A 248-amino-acid chain; its full sequence is Phosphatidylglycerol--prolipoprotein diacylglyceryl transferase (248 aa).

The next 3 helical transmembrane spans lie at 6-26 (FTLF…GMIL), 47-67 (NIAI…YVVF), and 84-104 (GGGL…YIYT). R130 lines the a 1,2-diacyl-sn-glycero-3-phospho-(1'-sn-glycerol) pocket. 2 helical membrane passes run 186–206 (GQVI…IEGL) and 218–238 (MAQV…VYLS).

Belongs to the Lgt family.

It localises to the cell membrane. It catalyses the reaction L-cysteinyl-[prolipoprotein] + a 1,2-diacyl-sn-glycero-3-phospho-(1'-sn-glycerol) = an S-1,2-diacyl-sn-glyceryl-L-cysteinyl-[prolipoprotein] + sn-glycerol 1-phosphate + H(+). It participates in protein modification; lipoprotein biosynthesis (diacylglyceryl transfer). Catalyzes the transfer of the diacylglyceryl group from phosphatidylglycerol to the sulfhydryl group of the N-terminal cysteine of a prolipoprotein, the first step in the formation of mature lipoproteins. This chain is Phosphatidylglycerol--prolipoprotein diacylglyceryl transferase, found in Clostridioides difficile (strain 630) (Peptoclostridium difficile).